The primary structure comprises 885 residues: Alpha-actinin (885 aa).

The segment at 1-242 is actin-binding; that stretch reads MTQDGYMQQE…IMTYVSWYYH (242 aa). 2 Calponin-homology (CH) domains span residues 26-130 and 139-245; these read KQQR…LRFA and MTAK…HAFH. Spectrin repeat units lie at residues 270-377, 389-494, 508-614, and 626-727; these read LMEE…EEWL, HLAQ…ALDE, EFAK…HTLQ, and LRRQ…NEVE. EF-hand domains follow at residues 741–776 and 780–815; these read EQLN…LGYN and DDRP…EYTD. Residues Asp754, Thr758, Arg760, Glu765, Asp793, Asn795, Thr797, and Tyr799 each coordinate Ca(2+).

The protein belongs to the alpha-actinin family. As to quaternary structure, homodimer; antiparallel.

F-actin cross-linking protein which is thought to anchor actin to a variety of intracellular structures. This is a bundling protein. In Dermatophagoides farinae (American house dust mite), this protein is Alpha-actinin.